Here is a 131-residue protein sequence, read N- to C-terminus: Small ribosomal subunit protein uS8 (131 aa).

This sequence belongs to the universal ribosomal protein uS8 family. In terms of assembly, part of the 30S ribosomal subunit. Contacts proteins S5 and S12.

One of the primary rRNA binding proteins, it binds directly to 16S rRNA central domain where it helps coordinate assembly of the platform of the 30S subunit. In Hyphomonas neptunium (strain ATCC 15444), this protein is Small ribosomal subunit protein uS8.